The sequence spans 274 residues: Diaminopimelate epimerase (274 aa).

Substrate is bound by residues Asn-11, Gln-44, and Asn-64. The Proton donor role is filled by Cys-73. Substrate-binding positions include 74 to 75 (GN), Asn-157, Asn-190, and 208 to 209 (ER). Cys-217 acts as the Proton acceptor in catalysis. 218–219 (GS) is a substrate binding site.

It belongs to the diaminopimelate epimerase family. Homodimer.

The protein resides in the cytoplasm. It catalyses the reaction (2S,6S)-2,6-diaminopimelate = meso-2,6-diaminopimelate. It participates in amino-acid biosynthesis; L-lysine biosynthesis via DAP pathway; DL-2,6-diaminopimelate from LL-2,6-diaminopimelate: step 1/1. Catalyzes the stereoinversion of LL-2,6-diaminopimelate (L,L-DAP) to meso-diaminopimelate (meso-DAP), a precursor of L-lysine and an essential component of the bacterial peptidoglycan. The protein is Diaminopimelate epimerase of Haemophilus ducreyi (strain 35000HP / ATCC 700724).